The chain runs to 114 residues: MIDRVLLELNKTEGIKGSMVVGKDGLVIASQLPGSVDAELVGAMASAAFGAAERTAAEIGMGTLEQTMIEGEHGKTLMVDAGEGILVVLTDAKVNLGLIRITMKRAAEKIKAMF.

To M.jannaschii MJ0310 and MJ0714.

This is an uncharacterized protein from Methanocaldococcus jannaschii (strain ATCC 43067 / DSM 2661 / JAL-1 / JCM 10045 / NBRC 100440) (Methanococcus jannaschii).